The chain runs to 156 residues: Small ribosomal subunit protein uS7 (156 aa).

This sequence belongs to the universal ribosomal protein uS7 family. As to quaternary structure, part of the 30S ribosomal subunit. Contacts proteins S9 and S11.

In terms of biological role, one of the primary rRNA binding proteins, it binds directly to 16S rRNA where it nucleates assembly of the head domain of the 30S subunit. Is located at the subunit interface close to the decoding center, probably blocks exit of the E-site tRNA. The polypeptide is Small ribosomal subunit protein uS7 (Pasteurella multocida (strain Pm70)).